The sequence spans 45 residues: Large ribosomal subunit protein bL34 (45 aa).

It belongs to the bacterial ribosomal protein bL34 family.

The protein is Large ribosomal subunit protein bL34 of Leifsonia xyli subsp. xyli (strain CTCB07).